Here is a 237-residue protein sequence, read N- to C-terminus: Purine nucleoside phosphorylase DeoD-type (237 aa).

Histidine 4 contacts a purine D-ribonucleoside. Phosphate-binding positions include glycine 20, arginine 24, arginine 43, and 87 to 90 (RVGT). Residues 179 to 181 (EME) and 203 to 204 (SD) contribute to the a purine D-ribonucleoside site. Aspartate 204 (proton donor) is an active-site residue.

Belongs to the PNP/UDP phosphorylase family. Homohexamer; trimer of homodimers.

The enzyme catalyses a purine D-ribonucleoside + phosphate = a purine nucleobase + alpha-D-ribose 1-phosphate. The catalysed reaction is a purine 2'-deoxy-D-ribonucleoside + phosphate = a purine nucleobase + 2-deoxy-alpha-D-ribose 1-phosphate. Functionally, catalyzes the reversible phosphorolytic breakdown of the N-glycosidic bond in the beta-(deoxy)ribonucleoside molecules, with the formation of the corresponding free purine bases and pentose-1-phosphate. The sequence is that of Purine nucleoside phosphorylase DeoD-type from Streptococcus pyogenes serotype M4 (strain MGAS10750).